Consider the following 4146-residue polypeptide: DNA-dependent protein kinase catalytic subunit (4146 aa).

HEAT repeat units lie at residues 308-343 (DDYQ…LKQI), 925-962 (VIYL…VAFM), 1026-1062 (QDTV…LRWS), and 1075-1111 (PVNT…YRDF). 2 TPR repeats span residues 1745–1778 (PMKS…SQSP) and 1974–2007 (VFSE…QRNY). Residue Ser2075 is modified to Phosphoserine; by autocatalysis. Phosphothreonine; by autocatalysis is present on Thr2631. At Ser2634 the chain carries Phosphoserine; by autocatalysis. Residues Thr2659 and Thr2668 each carry the phosphothreonine; by autocatalysis modification. Positions 2873-3556 (FIACVQDMCY…VYPFMVSGES (684 aa)) constitute an FAT domain. Residues 3739-4071 (FDERVSVMAS…IHCAKRKLDG (333 aa)) form the PI3K/PI4K catalytic domain. Residues 3745–3751 (VMASIRK) are G-loop. The tract at residues 3937 to 3945 (GIGDRHLSN) is catalytic loop. The segment at 3957–3982 (GIDFGHAFGTATQFLPVPELMPFRLT) is activation loop. An FATC domain is found at 4114–4146 (DGLTEETQVQCLIDQATDPNILGRVWKGWEPWI).

It belongs to the PI3/PI4-kinase family. DNA-PK is a heterotrimer of prkdc and the Ku dimer (composed of xrcc6/Ku70 and xrcc5/Ku86). Component of the core long-range non-homologous end joining (NHEJ) complex (also named DNA-PK complex) composed of prkdc, lig4, xrcc4, xrcc6/ku70, xrcc5/ku86 and nhej1/xlf. Additional component of the NHEJ complex includes paxx. Following autophosphorylation, prkdc dissociates from DNA. Post-translationally, autophosphorylated at two clusters, the T2609 cluster and the S2056 cluster. Autophosphorylated on Ser-2075, Thr-2631, Thr-2659 and Thr-2668. Ser-2075 and Thr-2668 are DNA damage-inducible phosphorylation sites (inducible with ionizing radiation, IR) dephosphorylated by PPP5C. Autophosphorylation induces a conformational change that leads to remodeling of the DNA-PK complex, requisite for efficient end processing and DNA repair. Autophosphorylation in trans within DNA-PK complexes loaded on DNA ends leads to the dissociation of PRKDC from DNA and the transition into the short-range NHEJ complex. Autophosphorylation of the T2609 cluster is required for hematopoietic development and protein synthesis in erythrocytes precursors.

It localises to the nucleus. The protein localises to the nucleolus. It carries out the reaction L-seryl-[protein] + ATP = O-phospho-L-seryl-[protein] + ADP + H(+). The enzyme catalyses L-threonyl-[protein] + ATP = O-phospho-L-threonyl-[protein] + ADP + H(+). Serine/threonine-protein kinase that acts as a molecular sensor for DNA damage. Involved in DNA nonhomologous end joining (NHEJ) required for double-strand break (DSB) repair and V(D)J recombination. Must be bound to DNA to express its catalytic properties. Promotes processing of hairpin DNA structures in V(D)J recombination by activation of the hairpin endonuclease artemis (DCLRE1C). Recruited by XRCC5 and XRCC6 to DNA ends and is required to (1) protect and align broken ends of DNA, thereby preventing their degradation, (2) and sequester the DSB for repair by NHEJ. Acts as a scaffold protein to aid the localization of DNA repair proteins to the site of damage. The assembly of the DNA-PK complex at DNA ends is also required for the NHEJ ligation step. Found at the ends of chromosomes, suggesting a further role in the maintenance of telomeric stability and the prevention of chromosomal end fusion. As part of the DNA-PK complex, involved in the early steps of ribosome assembly by promoting the processing of precursor rRNA into mature 18S rRNA in the small-subunit processome. Recognizes the substrate consensus sequence [ST]-Q. Phosphorylates 'Ser-139' of histone variant H2AX, thereby regulating DNA damage response mechanism. The polypeptide is DNA-dependent protein kinase catalytic subunit (prkdc) (Xenopus laevis (African clawed frog)).